Here is a 307-residue protein sequence, read N- to C-terminus: Ribosomal RNA small subunit methyltransferase A (307 aa).

S-adenosyl-L-methionine contacts are provided by Asn35, Val37, Gly62, Glu83, Asp113, and Asn136.

It belongs to the class I-like SAM-binding methyltransferase superfamily. rRNA adenine N(6)-methyltransferase family. RsmA subfamily.

The protein resides in the cytoplasm. The catalysed reaction is adenosine(1518)/adenosine(1519) in 16S rRNA + 4 S-adenosyl-L-methionine = N(6)-dimethyladenosine(1518)/N(6)-dimethyladenosine(1519) in 16S rRNA + 4 S-adenosyl-L-homocysteine + 4 H(+). Functionally, specifically dimethylates two adjacent adenosines (A1518 and A1519) in the loop of a conserved hairpin near the 3'-end of 16S rRNA in the 30S particle. May play a critical role in biogenesis of 30S subunits. The protein is Ribosomal RNA small subunit methyltransferase A of Bifidobacterium longum (strain DJO10A).